Here is a 167-residue protein sequence, read N- to C-terminus: Glucose-6-phosphate isomerase (167 aa).

Catalysis depends on E54, which acts as the Proton donor. Residue H85 is part of the active site.

The protein belongs to the GPI family.

It is found in the cytoplasm. The enzyme catalyses alpha-D-glucose 6-phosphate = beta-D-fructose 6-phosphate. The protein operates within carbohydrate biosynthesis; gluconeogenesis. It functions in the pathway carbohydrate degradation; glycolysis; D-glyceraldehyde 3-phosphate and glycerone phosphate from D-glucose: step 2/4. In terms of biological role, catalyzes the reversible isomerization of glucose-6-phosphate to fructose-6-phosphate. This Klebsiella oxytoca protein is Glucose-6-phosphate isomerase.